A 684-amino-acid chain; its full sequence is MASGLTANKKLRHKITAAALLVTLGVVYGDIGTSPLYVMKSIVAGNGGMGHFDTDFLVGSVSLIFWTLLIITTVKYVLIALRADNNGEGGIFALYTLVRQRARWLVLPAMVGGAALLADGMLTPAVTVTTAIEGLKGVHINGNILIDNQQQVIWVTVLIITFLFFIQRFGTDLIGKAFGPIMFVWFTFLGVAGFIALSKDWSMLRALNPYYALHLLVSPDNKMGLFILGSIFLATTGAEALYSDMGHVGRGNIYLSWPYVNICLVLNYFGQAVWLDQNSKVTAFNKITDFNPFFQMLPESIRLGAIILATLAAIIASQALISGSYTLVSEAIKLRFLPRLHIIYPTRLKGQLYIPVVNTILWLACLAIIGYFKTSAEMEGAYGLAITITMLMTTLLLYQYLRSRHAPAVVAIGTLIFFSAIETVFFISSAVKFLHGGYVTAMIAFIILAVMYVWQYGGRIRDDNTYRAEMASLFAYKNQLSELRNDPDYPTYTTNLVYMTQIANDHYIKKEILYSILDKRPKRARVYWFVTVNVTDEPYTAEYTTDTYGTDYMVNVQLYLGFRMEQQVNVFLRQIVNDMMREGELPTQPQKYTTIPDRQVGDWTFVLLHEELSPQTQIKGFQKAIIQARLRLQHIAVSPAQWFGLEYADTIDETVPLVLGKIPITKLNRLTRSQAEAQPEDEDD.

12 helical membrane-spanning segments follow: residues 19–39 (ALLVTLGVVYGDIGTSPLYVM), 61–81 (VSLIFWTLLIITTVKYVLIAL), 104–124 (WLVLPAMVGGAALLADGMLTP), 151–171 (QVIWVTVLIITFLFFIQRFGT), 177–197 (AFGPIMFVWFTFLGVAGFIAL), 223–243 (MGLFILGSIFLATTGAEALYS), 255–275 (LSWPYVNICLVLNYFGQAVWL), 303–323 (LGAIILATLAAIIASQALISG), 352–372 (LYIPVVNTILWLACLAIIGYF), 381–401 (AYGLAITITMLMTTLLLYQYL), 407–427 (PAVVAIGTLIFFSAIETVFFI), and 433–453 (FLHGGYVTAMIAFIILAVMYV).

This sequence belongs to the HAK/KUP transporter (TC 2.A.72) family.

It is found in the cell membrane. It catalyses the reaction K(+)(in) + H(+)(in) = K(+)(out) + H(+)(out). Transport of potassium into the cell. Likely operates as a K(+):H(+) symporter. This is Probable potassium transport system protein Kup from Lacticaseibacillus paracasei (strain ATCC 334 / BCRC 17002 / CCUG 31169 / CIP 107868 / KCTC 3260 / NRRL B-441) (Lactobacillus paracasei).